Consider the following 375-residue polypeptide: G-protein coupled estrogen receptor 1 (375 aa).

M1 is subject to N-acetylmethionine. Over 1–62 (MDATTPAQTV…QQYVIALFLS (62 aa)) the chain is Extracellular. Residues N32 and N44 are each glycosylated (N-linked (GlcNAc...) asparagine). Residues 63–84 (CLYTIFLFPIGFVGNILILVVN) form a helical membrane-spanning segment. At 85-96 (ISFREKMTIPDL) the chain is on the cytoplasmic side. The chain crosses the membrane as a helical span at residues 97 to 120 (YFINLAAADLILVADSLIEVFNLD). The Extracellular portion of the chain corresponds to 121-132 (EQYYDIAVLCTF). C130 and C207 are oxidised to a cystine. Residues 133–153 (MSLFLQINMYSSVFFLTWMSF) form a helical membrane-spanning segment. The Cytoplasmic segment spans residues 154–175 (DRYLALAKAMRCGLFRTKHHAR). The chain crosses the membrane as a helical span at residues 176-194 (LSCGLIWMASVSATLVPFT). Over 195 to 220 (AVHLRHTEEACFCFADVREVQWLEVT) the chain is Extracellular. Residues 221–236 (LGFIMPFAIIGLCYSL) form a helical membrane-spanning segment. Topologically, residues 237 to 259 (IVRALIRAHRHRGLRPRRQKALR) are cytoplasmic. Residues 260-280 (MIFAVVLVFFICWLPENVFIS) traverse the membrane as a helical segment. Topologically, residues 281-306 (VHLLQWTQPGDTPCKQSFRHAYPLTG) are extracellular. The chain crosses the membrane as a helical span at residues 307–327 (HIVNLAAFSNSCLNPLIYSFL). Residues 328-375 (GETFRDKLRLYVEQKTSLPALNRFCHATLKAVIPDSTEQSEVRFSSAV) lie on the Cytoplasmic side of the membrane.

This sequence belongs to the G-protein coupled receptor 1 family. Interacts with RAMP3; the interaction confers proper subcellular localization and function in cardioprotection. Interacts with KRT7 and KRT8. Interacts with EGFR; the interaction increases after agonist-induced stimulation in cancer-associated fibroblasts (CAF). Interacts with EGFR and ESR1. Interacts (via C-terminus tail motif) with DLG4 (via N-terminus tandem pair of PDZ domains); the interaction is direct and induces the increase of GPER1 protein levels residing at the plasma membrane surface in a estradiol-independent manner. Homodimer. Heterodimer; heterodimerizes with other G-protein-coupled receptor (GPCRs) like CRHR1, HTR1A and PAQR8. In terms of processing, ubiquitinated; ubiquitination occurs at the plasma membrane and leads to proteasome-mediated degradation. N-glycosylated. As to expression, expressed in brain, heart, spleen, preadipocytes, mature adipocytes and primary hippocampal neurons. Expressed in neurons of the hippocampus, hypothalamic paraventricular nucleus (PVH), supraoptic nucleus (SON) and the median eminence. Expressed in the nucleus ambiguous (at protein level). Expressed in brain, pituitary gland, adrenal medulla, renal pelvis, ovary, endothelial cells, visceral fat tissues and islets of Langerhans.

It localises to the nucleus. It is found in the cytoplasm. The protein localises to the perinuclear region. The protein resides in the cytoskeleton. Its subcellular location is the cell membrane. It localises to the endoplasmic reticulum membrane. It is found in the golgi apparatus membrane. The protein localises to the cell projection. The protein resides in the dendrite. Its subcellular location is the cytoplasmic vesicle membrane. It localises to the early endosome. It is found in the recycling endosome. The protein localises to the golgi apparatus. The protein resides in the trans-Golgi network. Its subcellular location is the dendritic spine membrane. It localises to the axon. It is found in the postsynaptic density. The protein localises to the mitochondrion membrane. G-protein coupled estrogen receptor that binds to 17-beta-estradiol (E2) with high affinity, leading to rapid and transient activation of numerous intracellular signaling pathways. Stimulates cAMP production, calcium mobilization and tyrosine kinase Src inducing the release of heparin-bound epidermal growth factor (HB-EGF) and subsequent transactivation of the epidermal growth factor receptor (EGFR), activating downstream signaling pathways such as PI3K/Akt and ERK/MAPK. Mediates pleiotropic functions among others in the cardiovascular, endocrine, reproductive, immune and central nervous systems. Has a role in cardioprotection by reducing cardiac hypertrophy and perivascular fibrosis in a RAMP3-dependent manner. Regulates arterial blood pressure by stimulating vasodilation and reducing vascular smooth muscle and microvascular endothelial cell proliferation. Plays a role in blood glucose homeostasis contributing to the insulin secretion response by pancreatic beta cells. Triggers mitochondrial apoptosis during pachytene spermatocyte differentiation. Stimulates uterine epithelial cell proliferation. Enhances uterine contractility in response to oxytocin. Contributes to thymic atrophy by inducing apoptosis. Attenuates TNF-mediated endothelial expression of leukocyte adhesion molecules. Promotes neuritogenesis in developing hippocampal neurons. Plays a role in acute neuroprotection against NMDA-induced excitotoxic neuronal death. Increases firing activity and intracellular calcium oscillations in luteinizing hormone-releasing hormone (LHRH) neurons. Inhibits early osteoblast proliferation at growth plate during skeletal development. Inhibits mature adipocyte differentiation and lipid accumulation. Involved in the recruitment of beta-arrestin 2 ARRB2 at the plasma membrane in epithelial cells. Also functions as a receptor for aldosterone mediating rapid regulation of vascular contractibility through the PI3K/ERK signaling pathway. Involved in cancer progression regulation. Stimulates cancer-associated fibroblast (CAF) proliferation by a rapid genomic response through the EGFR/ERK transduction pathway. Associated with EGFR, may act as a transcription factor activating growth regulatory genes (c-fos, cyclin D1). Promotes integrin alpha-5/beta-1 and fibronectin (FN) matrix assembly in breast cancer cells. The chain is G-protein coupled estrogen receptor 1 (Gper1) from Mus musculus (Mouse).